The primary structure comprises 292 residues: tRNA pseudouridine synthase B (292 aa).

Residue D40 is the Nucleophile of the active site.

It belongs to the pseudouridine synthase TruB family. Type 1 subfamily.

It catalyses the reaction uridine(55) in tRNA = pseudouridine(55) in tRNA. Its function is as follows. Responsible for synthesis of pseudouridine from uracil-55 in the psi GC loop of transfer RNAs. The polypeptide is tRNA pseudouridine synthase B (Mycoplasma mycoides subsp. mycoides SC (strain CCUG 32753 / NCTC 10114 / PG1)).